The primary structure comprises 150 residues: MTDKDMIEIWTDGACSGNPGPGGWGALIRWNGHEKELYGGDPATTNNRMEMTAVIEALNALNRPSKITLNVDSTYVKDGLTKWIKGWKRNGWKTADKKPVKNQELWMAMEEACKRHEITWVWVKGHAGDEGNERADGLARKGTDEVRGRK.

One can recognise an RNase H type-1 domain in the interval 3 to 144; the sequence is DKDMIEIWTD…ADGLARKGTD (142 aa). Mg(2+)-binding residues include aspartate 12, glutamate 50, aspartate 72, and aspartate 136. A disordered region spans residues 129–150; that stretch reads DEGNERADGLARKGTDEVRGRK.

This sequence belongs to the RNase H family. As to quaternary structure, monomer. The cofactor is Mg(2+).

It is found in the cytoplasm. The catalysed reaction is Endonucleolytic cleavage to 5'-phosphomonoester.. Its function is as follows. Endonuclease that specifically degrades the RNA of RNA-DNA hybrids. The sequence is that of Ribonuclease H from Hyphomonas neptunium (strain ATCC 15444).